The primary structure comprises 114 residues: T cell receptor beta variable 6-1 (114 aa).

The signal sequence occupies residues 1–21; it reads MSIGLLCCVAFSLLWASPVNA. Residues 22–114 enclose the Ig-like domain; it reads GVTQTPKFQV…TSVYFCASSE (93 aa). Cysteines 42 and 110 form a disulfide. A glycan (N-linked (GlcNAc...) asparagine) is linked at Asn84.

In terms of assembly, alpha-beta TR is a heterodimer composed of an alpha and beta chain; disulfide-linked. The alpha-beta TR is associated with the transmembrane signaling CD3 coreceptor proteins to form the TR-CD3 (TcR or TCR). The assembly of alpha-beta TR heterodimers with CD3 occurs in the endoplasmic reticulum where a single alpha-beta TR heterodimer associates with one CD3D-CD3E heterodimer, one CD3G-CD3E heterodimer and one CD247 homodimer forming a stable octameric structure. CD3D-CD3E and CD3G-CD3E heterodimers preferentially associate with TR alpha and TR beta chains, respectively. The association of the CD247 homodimer is the last step of TcR assembly in the endoplasmic reticulum and is required for transport to the cell surface.

It is found in the cell membrane. Functionally, v region of the variable domain of T cell receptor (TR) beta chain that participates in the antigen recognition. Alpha-beta T cell receptors are antigen specific receptors which are essential to the immune response and are present on the cell surface of T lymphocytes. Recognize peptide-major histocompatibility (MH) (pMH) complexes that are displayed by antigen presenting cells (APC), a prerequisite for efficient T cell adaptive immunity against pathogens. Binding of alpha-beta TR to pMH complex initiates TR-CD3 clustering on the cell surface and intracellular activation of LCK that phosphorylates the ITAM motifs of CD3G, CD3D, CD3E and CD247 enabling the recruitment of ZAP70. In turn ZAP70 phosphorylates LAT, which recruits numerous signaling molecules to form the LAT signalosome. The LAT signalosome propagates signal branching to three major signaling pathways, the calcium, the mitogen-activated protein kinase (MAPK) kinase and the nuclear factor NF-kappa-B (NF-kB) pathways, leading to the mobilization of transcription factors that are critical for gene expression and essential for T cell growth and differentiation. The T cell repertoire is generated in the thymus, by V-(D)-J rearrangement. This repertoire is then shaped by intrathymic selection events to generate a peripheral T cell pool of self-MH restricted, non-autoaggressive T cells. Post-thymic interaction of alpha-beta TR with the pMH complexes shapes TR structural and functional avidity. This is T cell receptor beta variable 6-1 from Homo sapiens (Human).